Reading from the N-terminus, the 867-residue chain is Mitochondrial 15S rRNA processing factor CCM1 (867 aa).

The N-terminal 96 residues, 1 to 96 (MLRYTRNYRL…KNLKAQIKRS (96 aa)), are a transit peptide targeting the mitochondrion. PPR repeat units follow at residues 337–371 (NRIN…SKEH) and 374–408 (DLIA…GINP).

Belongs to the CCM1 family. Binds to mitochondrial small subunit 15S rRNA.

It is found in the mitochondrion. Its function is as follows. Regulates mitochondrial small subunit maturation by controlling 15S rRNA 5'-end processing. Localizes to the 5' precursor of the 15S rRNA in a position that is subsequently occupied by mS47 in the mature yeast mtSSU. Uses structure and sequence-specific RNA recognition, binding to a single-stranded region of the precursor and specifically recognizing bases -6 to -1. The exchange of Ccm1 for mS47 is coupled to the irreversible removal of precursor rRNA that is accompanied by conformational changes of the mitoribosomal proteins uS5m and mS26. These conformational changes signal completion of 5'-end rRNA processing through protection of the mature 5'-end of the 15S rRNA and stabilization of mS47. The removal of the 5' precursor together with the dissociation of Ccm1 may be catalyzed by the 5'-3' exoribonuclease Pet127. Involved in the specific removal of group I introns in mitochondrial encoded transcripts. This is Mitochondrial 15S rRNA processing factor CCM1 (CCM1) from Vanderwaltozyma polyspora (strain ATCC 22028 / DSM 70294 / BCRC 21397 / CBS 2163 / NBRC 10782 / NRRL Y-8283 / UCD 57-17) (Kluyveromyces polysporus).